Consider the following 113-residue polypeptide: Large ribosomal subunit protein P2 (113 aa).

The segment at 66–113 (PVGGGGAVAAADAAPAAAAGGDKKEAKKEEKKEESESEDDDMGFALFE) is disordered. Positions 73–85 (VAAADAAPAAAAG) are enriched in low complexity. Over residues 86–99 (GDKKEAKKEEKKEE) the composition is skewed to basic and acidic residues. A phosphoserine mark is found at S100 and S102.

It belongs to the eukaryotic ribosomal protein P1/P2 family. P1 and P2 exist as dimers at the large ribosomal subunit.

In terms of biological role, plays an important role in the elongation step of protein synthesis. The protein is Large ribosomal subunit protein P2 (RpLP2) of Drosophila melanogaster (Fruit fly).